Reading from the N-terminus, the 876-residue chain is MADPTFAATSSSTSFRGLHERLVAMTQELAEERRHKRGINSSAGANKRSSSTPDGSVLKNDVKQQLAKERREQQKRQQEANKEKQLLEKEQKAKLQYEKQLEEKHRKLKEQKEKDQRRQASAEEKRKQKQAEDTEKFKAVVSRTLERCNRIDQRQKRWSWEGGVMNADKSGKLENKRSSSLSRKDNRLHPRGDMQHVDNTPGMTKYVFRYVTAPVFSSDEIKSSAMFCKPSAKTPVAAKLEKITTKKLDASLRGHVEGLSMMNIEIPPKITIEVPSPPKLEESSEADAEVRLQTMDDISKVKEDASQKVDIKVPTDENIARHPKPNVEELSPVSVDTSSSVELSSIVSVNSSPSLSTGSFSFGSVEISPVVSIDASLETNIDTSPELSMDSGNTKVASEIKTEAPLQARGESRLEASVEGQPEANVEGSPKNPEIDKRNINLTTKKQPLCHIPCYRWPSSSALGCRPPSPLKALQTRKIRPPSPIPVSSKLSTKTSLSYKITPVQNVLYVPNSLGVIATKKETIQKYPIKKEFGNRSMPSAEAIKKAFIQIRHAAYEQSKNEKERLQKEETKQRIARKPEIMAEKLDKVPAEGSLPCQDEQQDKNPTKTFLESPEVQKAELQKGDSAMMKSRDSAEQRKKEQENILQHWQERLERRKASEISFSSEDEADDEGESEDSLEIFPSGGKMLSMKLKKFHKYAKTKPQKLVFLQSGTDEVDTNKNVYFNGDMKAVKQKDPKYSMIQGKGSKLSAKKPPTRPIRSRKTKEGSTAIRPTQSASSNPNHKWVCDKVIDFNQTPFLKTTLTKSNKESPADSKIACQGPQAHLDHRKRTKSVSVPLTNVLSHLHITGRASNLEHPFASVYSRLAFGKEAEESDV.

Disordered regions lie at residues 30–139 (AEER…KFKA), 162–200 (GGVMNADKSGKLENKRSSSLSRKDNRLHPRGDMQHVDNT), and 402–438 (TEAPLQARGESRLEASVEGQPEANVEGSPKNPEIDKR). A compositionally biased stretch (polar residues) spans 39-54 (INSSAGANKRSSSTPD). A coiled-coil region spans residues 58–136 (LKNDVKQQLA…KQKQAEDTEK (79 aa)). Composition is skewed to basic and acidic residues over residues 60–139 (NDVK…KFKA) and 169–196 (KSGKLENKRSSSLSRKDNRLHPRGDMQH). Phosphoserine is present on residues Ser-417 and Ser-483. 2 coiled-coil regions span residues 549 to 578 (IQIRHAAYEQSKNEKERLQKEETKQRIARK) and 626 to 658 (SAMMKSRDSAEQRKKEQENILQHWQERLERRKA). Disordered stretches follow at residues 558 to 683 (QSKN…EIFP) and 742 to 783 (IQGK…NPNH). Basic and acidic residues-rich tracts occupy residues 559–590 (SKNEKERLQKEETKQRIARKPEIMAEKLDKVP) and 630–659 (KSRDSAEQRKKEQENILQHWQERLERRKAS). Acidic residues predominate over residues 665–679 (SEDEADDEGESEDSL). Residues 750-763 (SAKKPPTRPIRSRK) are compositionally biased toward basic residues. A compositionally biased stretch (polar residues) spans 771–782 (IRPTQSASSNPN).

Belongs to the MAP7 family. In terms of tissue distribution, high expression in lung, skeletal muscle, brain, and kidney, with much weaker expression in spleen, small intestine, liver, and heart.

Its subcellular location is the cytoplasm. It localises to the cytoskeleton. The protein localises to the spindle. Promotes the assembly and stability of microtubules. This is MAP7 domain-containing protein 3 (Map7d3) from Mus musculus (Mouse).